The primary structure comprises 419 residues: Tyrosine--tRNA ligase (419 aa).

Tyrosine 34 is an L-tyrosine binding site. Positions 39-48 (PSGDSMHIGH) match the 'HIGH' region motif. L-tyrosine contacts are provided by tyrosine 168 and glutamine 172. The short motif at 230-234 (KFGKS) is the 'KMSKS' region element. Lysine 233 is a binding site for ATP. Positions 352-418 (VNLVDWLVSL…GKKKYFLVSY (67 aa)) constitute an S4 RNA-binding domain.

Belongs to the class-I aminoacyl-tRNA synthetase family. TyrS type 1 subfamily. As to quaternary structure, homodimer.

It localises to the cytoplasm. The catalysed reaction is tRNA(Tyr) + L-tyrosine + ATP = L-tyrosyl-tRNA(Tyr) + AMP + diphosphate + H(+). Catalyzes the attachment of tyrosine to tRNA(Tyr) in a two-step reaction: tyrosine is first activated by ATP to form Tyr-AMP and then transferred to the acceptor end of tRNA(Tyr). The chain is Tyrosine--tRNA ligase from Listeria welshimeri serovar 6b (strain ATCC 35897 / DSM 20650 / CCUG 15529 / CIP 8149 / NCTC 11857 / SLCC 5334 / V8).